The following is a 75-amino-acid chain: DNA-directed RNA polymerase subunit omega (75 aa).

This sequence belongs to the RNA polymerase subunit omega family. In terms of assembly, in cyanobacteria the RNAP catalytic core is composed of 2 alpha, 1 beta, 1 beta', 1 gamma and 1 omega subunit. When a sigma factor is associated with the core the holoenzyme is formed, which can initiate transcription.

The enzyme catalyses RNA(n) + a ribonucleoside 5'-triphosphate = RNA(n+1) + diphosphate. Promotes RNA polymerase assembly. Latches the N- and C-terminal regions of the beta' subunit thereby facilitating its interaction with the beta and alpha subunits. The chain is DNA-directed RNA polymerase subunit omega from Synechococcus sp. (strain WH7803).